The sequence spans 354 residues: Histidinol-phosphate aminotransferase (354 aa).

Lysine 222 carries the post-translational modification N6-(pyridoxal phosphate)lysine.

Belongs to the class-II pyridoxal-phosphate-dependent aminotransferase family. Histidinol-phosphate aminotransferase subfamily. In terms of assembly, homodimer. The cofactor is pyridoxal 5'-phosphate.

It carries out the reaction L-histidinol phosphate + 2-oxoglutarate = 3-(imidazol-4-yl)-2-oxopropyl phosphate + L-glutamate. The protein operates within amino-acid biosynthesis; L-histidine biosynthesis; L-histidine from 5-phospho-alpha-D-ribose 1-diphosphate: step 7/9. The polypeptide is Histidinol-phosphate aminotransferase (Leuconostoc citreum (strain KM20)).